Reading from the N-terminus, the 409-residue chain is Phosphoglycerate kinase (409 aa).

Substrate is bound by residues 22–24 (DLN), Arg37, 60–63 (HLSR), Arg122, and Arg164. Residues Lys215, Glu338, and 365 to 368 (GGDS) contribute to the ATP site.

Belongs to the phosphoglycerate kinase family. Monomer.

The protein localises to the cytoplasm. The enzyme catalyses (2R)-3-phosphoglycerate + ATP = (2R)-3-phospho-glyceroyl phosphate + ADP. Its pathway is carbohydrate degradation; glycolysis; pyruvate from D-glyceraldehyde 3-phosphate: step 2/5. This chain is Phosphoglycerate kinase (pgk), found in Mycoplasma pneumoniae (strain ATCC 29342 / M129 / Subtype 1) (Mycoplasmoides pneumoniae).